A 209-amino-acid chain; its full sequence is Large ribosomal subunit protein uL3 (209 aa).

Belongs to the universal ribosomal protein uL3 family. In terms of assembly, part of the 50S ribosomal subunit. Forms a cluster with proteins L14 and L19.

One of the primary rRNA binding proteins, it binds directly near the 3'-end of the 23S rRNA, where it nucleates assembly of the 50S subunit. The protein is Large ribosomal subunit protein uL3 of Clostridium tetani (strain Massachusetts / E88).